The following is a 163-amino-acid chain: Nucleotide-binding protein GTNG_0630 (163 aa).

Belongs to the YajQ family.

In terms of biological role, nucleotide-binding protein. This chain is Nucleotide-binding protein GTNG_0630, found in Geobacillus thermodenitrificans (strain NG80-2).